The sequence spans 311 residues: Olfactory receptor 2A5 (311 aa).

The Extracellular segment spans residues 1–24 (MTKNQTWVTEFILLGFPLSLRIQM). A glycan (N-linked (GlcNAc...) asparagine) is linked at N4. Residues 25–48 (LLSGLFSLLYVFTLLGNGAILGLI) form a helical membrane-spanning segment. Topologically, residues 49-56 (WLDSRLHT) are cytoplasmic. Residues 57-78 (PMYFFLSHLAIIDISYASNNVP) traverse the membrane as a helical segment. The Extracellular portion of the chain corresponds to 79-100 (KMLTNLGLNKRKTISFVPCTMQ). C97 and C189 are disulfide-bonded. Residues 101 to 120 (TFLYMAFAHTECLILVMMSY) form a helical membrane-spanning segment. At 121–139 (DRYMAICHPLQYSVIMRWG) the chain is on the cytoplasmic side. Residues 140-158 (VCTVLAVTSWACGSLLALV) traverse the membrane as a helical segment. The Extracellular portion of the chain corresponds to 159–196 (HVVLILRLPFCGPHEINHFFCEILSVLKLACADTWLNQ). Residues 197–219 (VVIFAASVFILVGPLCLVLVSYS) form a helical membrane-spanning segment. Residues 220-236 (RILAAILRIQSGEGRRK) lie on the Cytoplasmic side of the membrane. A helical membrane pass occupies residues 237–259 (AFSTCSSHLCMVGLFFGSAIVMY). Residues 260–272 (MAPKSRHPEEQQK) lie on the Extracellular side of the membrane. Residues 273-292 (VLSLFYSLFNPMLNPLIYSL) traverse the membrane as a helical segment. The Cytoplasmic segment spans residues 293–311 (RNAEVKGALKRVLWKQRSK).

The protein belongs to the G-protein coupled receptor 1 family.

The protein resides in the cell membrane. Its function is as follows. Odorant receptor. The protein is Olfactory receptor 2A5 (OR2A5) of Homo sapiens (Human).